The primary structure comprises 360 residues: Phosphoserine aminotransferase (360 aa).

Arginine 42 contributes to the L-glutamate binding site. Pyridoxal 5'-phosphate-binding positions include 76 to 77, tryptophan 102, threonine 153, aspartate 172, and glutamine 195; that span reads AR. Residue lysine 196 is modified to N6-(pyridoxal phosphate)lysine. 237 to 238 serves as a coordination point for pyridoxal 5'-phosphate; that stretch reads NT.

Belongs to the class-V pyridoxal-phosphate-dependent aminotransferase family. SerC subfamily. Homodimer. Requires pyridoxal 5'-phosphate as cofactor.

The protein localises to the cytoplasm. It catalyses the reaction O-phospho-L-serine + 2-oxoglutarate = 3-phosphooxypyruvate + L-glutamate. The enzyme catalyses 4-(phosphooxy)-L-threonine + 2-oxoglutarate = (R)-3-hydroxy-2-oxo-4-phosphooxybutanoate + L-glutamate. It functions in the pathway amino-acid biosynthesis; L-serine biosynthesis; L-serine from 3-phospho-D-glycerate: step 2/3. It participates in cofactor biosynthesis; pyridoxine 5'-phosphate biosynthesis; pyridoxine 5'-phosphate from D-erythrose 4-phosphate: step 3/5. Catalyzes the reversible conversion of 3-phosphohydroxypyruvate to phosphoserine and of 3-hydroxy-2-oxo-4-phosphonooxybutanoate to phosphohydroxythreonine. The chain is Phosphoserine aminotransferase from Photobacterium profundum (strain SS9).